The following is a 179-amino-acid chain: Nucleoside-triphosphatase THEP1 (179 aa).

ATP is bound by residues 7 to 14 (GMPGVGKT) and 98 to 105 (IIIIDEIG).

It belongs to the THEP1 NTPase family.

It carries out the reaction a ribonucleoside 5'-triphosphate + H2O = a ribonucleoside 5'-diphosphate + phosphate + H(+). In terms of biological role, has nucleotide phosphatase activity towards ATP, GTP, CTP, TTP and UTP. May hydrolyze nucleoside diphosphates with lower efficiency. The chain is Nucleoside-triphosphatase THEP1 from Pyrococcus abyssi (strain GE5 / Orsay).